We begin with the raw amino-acid sequence, 403 residues long: RUN domain-containing protein 3B (403 aa).

Residues 1–20 (MASRSLGGLSGSRGGGKKSL) form a disordered region. Position 13 is an omega-N-methylarginine (Arg-13). Residues 53-185 (DDSSPEFNNF…IDFSFCLKGE (133 aa)) enclose the RUN domain. The tract at residues 207-232 (SDSISSDEEELRTFGSSDSEGSTPEN) is disordered. A phosphoserine mark is found at Ser-211 and Ser-212. Positions 220–231 (FGSSDSEGSTPE) are enriched in polar residues. Residues 296–321 (AHKLEKEQLEYIIVELQDQLKSYQSL) adopt a coiled-coil conformation.

The protein belongs to the RUNDC3 family. In terms of assembly, interacts with RAP2A.

This Rattus norvegicus (Rat) protein is RUN domain-containing protein 3B (Rundc3b).